A 694-amino-acid polypeptide reads, in one-letter code: NADPH--cytochrome P450 reductase (694 aa).

At 1–8 (MAQLDTLD) the chain is on the lumenal side. A helical membrane pass occupies residues 9-31 (LVVLAVLLVGSVAYFTKGTYWAV). Over 32 to 694 (AKDPYASTGP…RGRYQEDVWS (663 aa)) the chain is Cytoplasmic. In terms of domain architecture, Flavodoxin-like spans 66–220 (CVIFYGSQTG…DFLAWKEPMW (155 aa)). FMN-binding positions include 72–77 (SQTGTA), 123–126 (ATYG), 168–177 (LGNNTYEHYN), and aspartate 203. In terms of domain architecture, FAD-binding FR-type spans 276–537 (HNPFIAPIAE…HVRHSNFKLP (262 aa)). Residue arginine 295 coordinates NADP(+). Residues 450–453 (RYYS), 468–470 (TAV), and 485–488 (GVTT) each bind FAD. NADP(+)-binding positions include threonine 551, 613–614 (SR), 619–623 (KVYVQ), and glutamate 655. Residue tryptophan 693 coordinates FAD.

Belongs to the NADPH--cytochrome P450 reductase family. It in the N-terminal section; belongs to the flavodoxin family. The protein in the C-terminal section; belongs to the flavoprotein pyridine nucleotide cytochrome reductase family. FAD is required as a cofactor. Requires FMN as cofactor.

It is found in the endoplasmic reticulum membrane. It localises to the mitochondrion outer membrane. The protein localises to the cell membrane. It carries out the reaction 2 oxidized [cytochrome P450] + NADPH = 2 reduced [cytochrome P450] + NADP(+) + H(+). In terms of biological role, this enzyme is required for electron transfer from NADP to cytochrome P450 in microsomes. It can also provide electron transfer to heme oxygenase and cytochrome B5. Involved in ergosterol biosynthesis. This Aspergillus niger protein is NADPH--cytochrome P450 reductase.